A 951-amino-acid polypeptide reads, in one-letter code: Protein inturned (951 aa).

Disordered regions lie at residues 1–32 (MEHS…FSSS), 189–208 (SSRN…NQRL), and 687–765 (TPKR…GGSG). The region spanning 187-269 (HQSSRNSKRS…PMQLKLTFET (83 aa)) is the PDZ domain. The span at 715–726 (PTRSSGGSDSGT) shows a compositional bias: low complexity. The span at 743–752 (MARKFGRRES) shows a compositional bias: basic and acidic residues. Gly residues predominate over residues 754–765 (GSGGSDGSGGSG).

The protein belongs to the inturned family. In terms of assembly, interacts with fuz and wdpcp; fuz, intu and wdpcp probably form the core CPLANE (ciliogenesis and planar polarity effectors) complex. As to expression, expressed in the neural plate during neural tube closure with subsequent strong expression in the ventral neural tube and in facial mesenchyme.

It is found in the cell surface. It localises to the cell membrane. The protein resides in the cytoplasm. Its subcellular location is the cytoskeleton. The protein localises to the cilium basal body. Functionally, plays a role in the definition of cell polarity via the planar cell polarity (PCP) cascade. Required for ciliogenesis by controlling the organization of the apical actin cytoskeleton and the positioning of the basal bodies at the apical cell surface, which in turn is essential for the normal orientation of elongating ciliary microtubules. Proposed to function as core component of a functional module called CPLANE (ciliogenesis and planar polarity effectors) involved in recruitment of peripheral IFT-A proteins to basal bodies. Controls the localization of both rhoa and disheveled in multi-ciliated cells. Has an indirect effect on hedgehog signaling. The protein is Protein inturned of Xenopus laevis (African clawed frog).